The chain runs to 520 residues: Translation initiation factor IF3-1, mitochondrial (520 aa).

Residues 1–66 (MAIWRIINRS…SNIFQNLRFL (66 aa)) constitute a mitochondrion transit peptide. The span at 271-282 (ARVKEESPKPDS) shows a compositional bias: basic and acidic residues. Positions 271–520 (ARVKEESPKP…YGIFSTPKTK (250 aa)) are disordered. Positions 336 to 361 (EPQSPNQHVNPQRPRFSNQAPNQQPT) are enriched in polar residues. Over residues 369–379 (PNQPPSAPRPQ) the composition is skewed to pro residues. 2 stretches are compositionally biased toward polar residues: residues 404–422 (NQAP…FPNQ) and 458–468 (FQNQAPNQQPT). Residues 473-485 (PQPPNPPRAPPRP) show a composition bias toward pro residues.

The protein belongs to the IF-3 family. In terms of assembly, monomer.

Its subcellular location is the mitochondrion. Functionally, IF-3 binds to the 30S ribosomal subunit and shifts the equilibrium between 70S ribosomes and their 50S and 30S subunits in favor of the free subunits, thus enhancing the availability of 30S subunits on which protein synthesis initiation begins. This chain is Translation initiation factor IF3-1, mitochondrial, found in Arabidopsis thaliana (Mouse-ear cress).